The chain runs to 549 residues: ATP synthase subunit alpha (549 aa).

Gly-172–Thr-179 lines the ATP pocket.

The protein belongs to the ATPase alpha/beta chains family. In terms of assembly, F-type ATPases have 2 components, CF(1) - the catalytic core - and CF(0) - the membrane proton channel. CF(1) has five subunits: alpha(3), beta(3), gamma(1), delta(1), epsilon(1). CF(0) has three main subunits: a(1), b(2) and c(9-12). The alpha and beta chains form an alternating ring which encloses part of the gamma chain. CF(1) is attached to CF(0) by a central stalk formed by the gamma and epsilon chains, while a peripheral stalk is formed by the delta and b chains.

It localises to the cell membrane. The catalysed reaction is ATP + H2O + 4 H(+)(in) = ADP + phosphate + 5 H(+)(out). Its function is as follows. Produces ATP from ADP in the presence of a proton gradient across the membrane. The alpha chain is a regulatory subunit. The sequence is that of ATP synthase subunit alpha from Mycobacterium tuberculosis (strain CDC 1551 / Oshkosh).